Consider the following 418-residue polypeptide: Tubulin alpha chain (418 aa).

GTP is bound by residues Gln-11, Glu-71, Ser-140, Gly-144, Thr-179, Asn-206, and Asn-228. Glu-71 provides a ligand contact to Mg(2+). The active site involves Glu-255.

It belongs to the tubulin family. In terms of assembly, dimer of alpha and beta chains. A typical microtubule is a hollow water-filled tube with an outer diameter of 25 nm and an inner diameter of 15 nM. Alpha-beta heterodimers associate head-to-tail to form protofilaments running lengthwise along the microtubule wall with the beta-tubulin subunit facing the microtubule plus end conferring a structural polarity. Microtubules usually have 13 protofilaments but different protofilament numbers can be found in some organisms and specialized cells. Mg(2+) serves as cofactor.

It is found in the cytoplasm. It localises to the cytoskeleton. The enzyme catalyses GTP + H2O = GDP + phosphate + H(+). Functionally, tubulin is the major constituent of microtubules, a cylinder consisting of laterally associated linear protofilaments composed of alpha- and beta-tubulin heterodimers. Microtubules grow by the addition of GTP-tubulin dimers to the microtubule end, where a stabilizing cap forms. Below the cap, tubulin dimers are in GDP-bound state, owing to GTPase activity of alpha-tubulin. The protein is Tubulin alpha chain (TUB1) of Ajellomyces capsulatus (Darling's disease fungus).